A 201-amino-acid polypeptide reads, in one-letter code: Large ribosomal subunit protein uL4 (201 aa).

Residues 43-71 (TRAQKTRSEVSGGGKKPWAQKGTGRARAG) are disordered.

This sequence belongs to the universal ribosomal protein uL4 family. As to quaternary structure, part of the 50S ribosomal subunit.

In terms of biological role, one of the primary rRNA binding proteins, this protein initially binds near the 5'-end of the 23S rRNA. It is important during the early stages of 50S assembly. It makes multiple contacts with different domains of the 23S rRNA in the assembled 50S subunit and ribosome. Functionally, forms part of the polypeptide exit tunnel. The polypeptide is Large ribosomal subunit protein uL4 (Pseudoalteromonas translucida (strain TAC 125)).